A 231-amino-acid polypeptide reads, in one-letter code: Female protein (231 aa).

Positions 1-19 (MDKMLLLLGVSILLSEVFA) are cleaved as a signal peptide. The region spanning 24 to 223 (TGKVFVFPRE…YAVIRPRCVA (200 aa)) is the Pentraxin (PTX) domain. The N-linked (GlcNAc...) asparagine glycan is linked to asparagine 51. An intrachain disulfide couples cysteine 55 to cysteine 114. Ca(2+) contacts are provided by aspartate 77, asparagine 78, glutamate 155, glutamine 156, aspartate 157, and glutamine 167.

It belongs to the pentraxin family. Homopentamer. Pentraxin (or pentaxin) have a discoid arrangement of 5 non-covalently bound subunits. Ca(2+) is required as a cofactor.

The protein resides in the secreted. This Nothocricetulus migratorius (Gray dwarf hamster) protein is Female protein.